The chain runs to 212 residues: Large ribosomal subunit protein uL4 (212 aa).

Belongs to the universal ribosomal protein uL4 family. Part of the 50S ribosomal subunit.

Its function is as follows. One of the primary rRNA binding proteins, this protein initially binds near the 5'-end of the 23S rRNA. It is important during the early stages of 50S assembly. It makes multiple contacts with different domains of the 23S rRNA in the assembled 50S subunit and ribosome. Forms part of the polypeptide exit tunnel. This is Large ribosomal subunit protein uL4 from Caulobacter vibrioides (strain ATCC 19089 / CIP 103742 / CB 15) (Caulobacter crescentus).